Here is a 139-residue protein sequence, read N- to C-terminus: Transcription initiation factor IIA small chain homolog (139 aa).

The tract at residues 113-139 is disordered; the sequence is LSAQGPSKRVNRAHAAAAGDDEDDDSD.

Belongs to the TFIIA subunit 2 family.

The protein resides in the nucleus. The chain is Transcription initiation factor IIA small chain homolog from Caenorhabditis elegans.